A 184-amino-acid polypeptide reads, in one-letter code: Thymidine kinase (184 aa).

ATP contacts are provided by residues 10 to 17 (GPMYSGKT) and 83 to 86 (DEVQ). E84 acts as the Proton acceptor in catalysis. C140, C143, C173, and C176 together coordinate Zn(2+).

The protein belongs to the thymidine kinase family. Homotetramer.

It is found in the cytoplasm. It carries out the reaction thymidine + ATP = dTMP + ADP + H(+). In Thermotoga petrophila (strain ATCC BAA-488 / DSM 13995 / JCM 10881 / RKU-1), this protein is Thymidine kinase.